The following is a 1427-amino-acid chain: MRDIFSFFEKPKDPLSFSAIRISLASPEKIREWSHGEVKKPETINYRTFKPERDGLFCAKIFGPVKDYECNCGKYKRMKHRGIVCEKCGVEVIQSKVRRERLGHISLATPVAHIWFLKSLPSRIGNMLDITLKDLEKVLYCEAYIVIDPKETGLMRGDLLSEERYLQLLDEYGDDKFSAGMGGEAILEMLKQVDVHGLAELLRTEMRAATSEAKRKKLAKRLKVVEAFRESGNRPEWMMLTVIPVLPPDLRPLVPLDGGRFATSDLNDLYRRVINRNNRLKRLLELNAPEIIIRNERRMLQEAVDALFDNGRRGKTITGPNKRPLKSLSDMLKGKQGRFRQNLLGKRVDYSGRSVIVVGPTLRLHQCGLPKKMALELFKPFIYNKLEERGYVNTIKSAKKMVEKERPEVWDILEEVISEHPVLLNRAPTLHRLGIQAFEPVLIEGKAIQLHPLVCAAFNADFDGDQMAVHVPLSVEAQMEARVLMMSTNNILSPASGKPIINPTQDIVLGLYYATRERKFEKGSYRADTLAFGEDGVAQGYLRGIYASLEEVRMAYDNGEVALHAGIRVRVPIIDDDGNPQLDEFGHVKRRIVETTVGRVIISEVLPKGVAFEYANKTLDKKALSALIDVCYRIHRNKETVLLADRLRTLGFDHAMRAGISICMDHMVIPPAKKVLLGEAQKEVERVVEQYQEGLITDGERYNKIVDIWASIADQVTTEMMAGIGKETVVDHETGKESIEPSFNPIYIMADSGARGSTQQIRQLAAMRGLMAKPSGEIIETPITANFREGLSVLQYFISTHGARKGLADTALKTANSGYLTRRLVDVAQDAVISEFDCGTLDGIRVAKLEEAGEVIQPLGDRILGRVALEDVVDPLTGEVLITANTELDEQAVRSIEDAGIEEVVIRSVLTCQLRRGVCALCYGRDLARGYRVNIGEAVGIIAAQSIGEPGTQLTMRTFHIGGTAARGKIEASYLEARTEGTVRLRRAVVQKKKDGTMVVMNRHGEIVVVDETGREREHNRLVYGAILKKADGERTKPGELLAEWDQFATPILTEVSGVVKFGDLIEGVSVQDRLDEVTGLSRKVVIESKAADVRPRISLKDPESGKTLKLPNSELEARYLLPVGAHIVAQEGDLIEAGEVIAKIPRDTTKVQDITGGLPRVAELFEARKPKDHAIISEIDGEVTFGKDTKGKRKVIITPYSPDGHALGDQAREYLIPKGKHIQVQPGDRVRAGDPLQDGPPNPHDILRVKGEKELSAWLVNEIQQVYRLQGVGINDKHIEVIVRQMLRRVRVREVGDTNFLVDEQVEKHIFEKENETVLERGGKPAIAEALLLGITKASLSTESFISASSFQETTKVLTEAAINGKTDDLRGLKENVIMGRLIPAGTGLPAYKRLQVVVEGEPVAQAPYVAPRPRPEETLTAVNEE.

Residues cysteine 70, cysteine 72, cysteine 85, and cysteine 88 each contribute to the Zn(2+) site. Mg(2+) is bound by residues aspartate 461, aspartate 463, and aspartate 465. Zn(2+)-binding residues include cysteine 838, cysteine 912, cysteine 919, and cysteine 922.

Belongs to the RNA polymerase beta' chain family. As to quaternary structure, the RNAP catalytic core consists of 2 alpha, 1 beta, 1 beta' and 1 omega subunit. When a sigma factor is associated with the core the holoenzyme is formed, which can initiate transcription. It depends on Mg(2+) as a cofactor. Zn(2+) serves as cofactor.

It carries out the reaction RNA(n) + a ribonucleoside 5'-triphosphate = RNA(n+1) + diphosphate. In terms of biological role, DNA-dependent RNA polymerase catalyzes the transcription of DNA into RNA using the four ribonucleoside triphosphates as substrates. The sequence is that of DNA-directed RNA polymerase subunit beta' from Sorangium cellulosum (strain So ce56) (Polyangium cellulosum (strain So ce56)).